Reading from the N-terminus, the 607-residue chain is Large ribosomal subunit assembly factor BipA (607 aa).

A tr-type G domain is found at 3–198 (HSIRNIAIIA…SIIKYAPAPN (196 aa)). GTP contacts are provided by residues 15 to 20 (DHGKTT) and 128 to 131 (NKID).

Belongs to the TRAFAC class translation factor GTPase superfamily. Classic translation factor GTPase family. BipA subfamily. Monomer.

The protein localises to the cytoplasm. The enzyme catalyses GTP + H2O = GDP + phosphate + H(+). In terms of biological role, a 50S ribosomal subunit assembly protein with GTPase activity, required for 50S subunit assembly at low temperatures, may also play a role in translation. Binds GTP and analogs. Binds the 70S ribosome between the 30S and 50S subunits, in a similar position as ribosome-bound EF-G; it contacts a number of ribosomal proteins, both rRNAs and the A-site tRNA. In Buchnera aphidicola subsp. Acyrthosiphon pisum (strain APS) (Acyrthosiphon pisum symbiotic bacterium), this protein is Large ribosomal subunit assembly factor BipA.